Here is a 141-residue protein sequence, read N- to C-terminus: Large ribosomal subunit protein uL11 (141 aa).

The protein belongs to the universal ribosomal protein uL11 family. In terms of assembly, part of the ribosomal stalk of the 50S ribosomal subunit. Interacts with L10 and the large rRNA to form the base of the stalk. L10 forms an elongated spine to which L12 dimers bind in a sequential fashion forming a multimeric L10(L12)X complex. One or more lysine residues are methylated.

Its function is as follows. Forms part of the ribosomal stalk which helps the ribosome interact with GTP-bound translation factors. This Syntrophus aciditrophicus (strain SB) protein is Large ribosomal subunit protein uL11.